Consider the following 269-residue polypeptide: 4-chlorobenzoyl coenzyme A dehalogenase (269 aa).

Residues Arg24 and 62–67 (AGFYLR) each bind substrate. His90 serves as the catalytic Proton acceptor. Substrate is bound at residue Gly114. Asp145 (nucleophile) is an active-site residue. Residue Arg257 participates in substrate binding.

It belongs to the enoyl-CoA hydratase/isomerase family. As to quaternary structure, homotetramer. Homotetramer, homooctamer and larger multimers. Homotrimer.

The catalysed reaction is 4-chlorobenzoyl-CoA + H2O = 4-hydroxybenzoyl-CoA + chloride + H(+). The protein operates within xenobiotic degradation; 4-chlorobenzoate degradation; 4-hydroxybenzoate from 4-chlorobenzoate: step 2/3. Inactivated by 1 mM Ag(+) and by 5 mM Cu(2+). Partially inhibited by 5 mM Zn(2+), Mn(2+), Co(2+), Fe(2+) and Ni(2+). Unaffected by 10 mM Na(+), K(+) and Li(+) and by 0.5 mM Mg(2+), Mn(2+), Fe(2+), Ca(2+), Co(2+) and Zn(2+). Inhibited by the sulfhydryl blocking agent 5,5'-dithio-bis-(2-nitrobenzoate), SDS and N-bromosuccinimide. Unaffected by sodium azide and EDTA. Inactivated following treatment with diethyl pyrocarbonate; this inactivation is reversible by treatment with hydroxylamine. In terms of biological role, dehalogenates 4-chlorobenzoyl-CoA, 4-iodobenzoyl-CoA and 4-bromobenzoyl-CoA, but not 4-fluorobenzoyl-CoA. Inactive towards crotonyl-CoA, alpha-methylcrotonyl-CoA and beta-methylcrotonyl-CoA. The protein is 4-chlorobenzoyl coenzyme A dehalogenase of Pseudomonas sp. (strain CBS-3).